A 298-amino-acid polypeptide reads, in one-letter code: Mitochondrial dicarboxylate/tricarboxylate transporter DTC (298 aa).

3 Solcar repeats span residues tryptophan 12–lysine 93, leucine 103–tyrosine 194, and glycine 202–phenylalanine 292. Helical transmembrane passes span phenylalanine 18–isoleucine 38, glycine 68–lysine 88, alanine 109–alanine 129, glycine 169–aspartate 189, valine 208–valine 228, and phenylalanine 268–glutamine 288.

This sequence belongs to the mitochondrial carrier (TC 2.A.29) family. In terms of tissue distribution, highly expressed in flower buds and at lower levels in roots, leaves and stems.

Its subcellular location is the mitochondrion inner membrane. Functionally, catalyzes the transport of dicarboxylates, such as oxoglutarate, oxaloacetate, malate, and succinate, and of tricarboxylates, such as citrate, isocitrate, cis-aconitate, and trans-aconitate by a counter-exchange mechanism across the inner mitochondrial membrane. Substrate preference in reconstituted proteoliposomes is oxaloacetate &gt; malonate &gt; malate &gt; maleate &gt; succinate &gt; oxoglutarate &gt; citrate &gt; trans-aconitate &gt; cis-aconitate &gt; sulfate &gt; isocitrate. May be important for plant metabolic functions requiring organic acid flux to or from the mitochondria, such as nitrogen assimilation, export of reducing equivalents from the mitochondria, and fatty acid elongation. The sequence is that of Mitochondrial dicarboxylate/tricarboxylate transporter DTC (DTC) from Arabidopsis thaliana (Mouse-ear cress).